The following is a 525-amino-acid chain: MAPSGDSNVKEHNNQVSYKKAINTKTDLILQNKKHANDIFDVIEYLQSEKEKEIIFATNACSKIFCELIERGDLFVGELPKEEDLAQGDRSAEEKYHIFMRHRYNSCVELMLENVSHESFQVKETSLCAVMKFVATEGKHPLQNLDWSEHYNFPRELIQALVEHLLSEKEDMSLLISRFQEFMEKDDVRYYVMSSVRYSTATVMERNKKAVIPVFQNNVFNLLTTINIPNQASEMTNFLVQQQSKHDDWKAAKLKEHKRAFEQMWLLFLRYKLPGSMYKKILVILHESILPQMSDPKLMMDFLSAAYDIGGAISLSALNGLFVPIHEHNLDYPDFYKKLYNLLDPSIFHVKYRARFFHLANIFLSSTHLPVYLVAAFVKRLARLSLTAPPTALLILLPFICNLIRRHPSCRVLIHRPSAADEPCDDPYVMEEEDPAQCHALESSLWEIKTLQNHHHPDVSKAATMINEPLSAQEEDISELLELTTFELMERELKGEKKTVPLEFDMATDLLKSSREVLGVHFTLE.

The next 3 membrane-spanning stretches (helical) occupy residues 305-325 (AAYDIGGAISLSALNGLFVPI), 356-376 (FFHLANIFLSSTHLPVYLVAA), and 384-404 (LSLTAPPTALLILLPFICNLI).

It belongs to the CBF/MAK21 family.

Its subcellular location is the nucleus membrane. The protein resides in the nucleus. It localises to the nucleolus. The protein is Nucleolar complex protein 4 homolog (noc4l) of Danio rerio (Zebrafish).